A 152-amino-acid chain; its full sequence is Large ribosomal subunit protein bL9 (152 aa).

The protein belongs to the bacterial ribosomal protein bL9 family.

Its function is as follows. Binds to the 23S rRNA. The sequence is that of Large ribosomal subunit protein bL9 from Gloeothece citriformis (strain PCC 7424) (Cyanothece sp. (strain PCC 7424)).